A 549-amino-acid chain; its full sequence is GATA-type transcription factor sreA (549 aa).

The interval 40–100 is disordered; that stretch reads AQAGREHPQD…TSPKSQKDTS (61 aa). 2 stretches are compositionally biased toward basic and acidic residues: residues 43 to 72 and 86 to 97; these read GREH…HEGE and HHVEKTSPKSQK. A GATA-type 1 zinc finger spans residues 106 to 130; the sequence is CSNCGTKSTPLWRRSPTGAMICNAC. Residues 141–174 are disordered; that stretch reads RPTKRNRTQASPEAYHPQNQSVGSQPDPAVTGSE. A cystein-rich region (CRR) region spans residues 180 to 198; that stretch reads CPGGGNCNGTGGAEGCDGC. The tract at residues 223–244 is disordered; it reads GNSDAVPSPEAEAPARNSGQPE. The segment at 251–275 adopts a GATA-type 2 zinc-finger fold; the sequence is CQNCGTTVTPLWRRDENGHPICNAC. Disordered stretches follow at residues 306–332, 375–459, and 482–535; these read RENS…PATL, NSGA…RLSS, and LGRQ…MREQ. The span at 309-331 shows a compositional bias: low complexity; that stretch reads SPTAATHSSHGSSASPEASSPAT. Over residues 383–396 the composition is skewed to pro residues; sequence HHPPPPRLLEPGHP. A compositionally biased stretch (low complexity) spans 485 to 497; that stretch reads QQQSQPHHPQSSP. Positions 498 to 515 are enriched in polar residues; it reads LAPTQAASQSLPGVSNMD. Residues 511-549 are a coiled coil; the sequence is VSNMDNHVEDRRAKLQREAEEMREQLRAKERELAELAGQ. Basic and acidic residues predominate over residues 516 to 535; that stretch reads NHVEDRRAKLQREAEEMREQ.

Its subcellular location is the nucleus. Functionally, GATA-type transcription repressor that regulates iron- acquisition genes through specific binding GATA sequence elements of target promoters. Iron acquisition regulation is critical for survival under both iron-limiting conditions (to acquire essential iron) and iron-replete conditions (to limit iron toxicity). SreA targets include genes encoding a number of key iron-regulated factors such as those involved in siderophore biosynthesis. The chain is GATA-type transcription factor sreA from Emericella nidulans (strain FGSC A4 / ATCC 38163 / CBS 112.46 / NRRL 194 / M139) (Aspergillus nidulans).